The chain runs to 393 residues: Phosphoglycerate kinase (393 aa).

Substrate is bound by residues 22–24, Arg37, 60–63, Arg119, and Arg152; these read DFN and HLGR. ATP-binding positions include Lys202, Gly293, Glu324, and 350–353; that span reads GGDS.

It belongs to the phosphoglycerate kinase family. As to quaternary structure, monomer.

Its subcellular location is the cytoplasm. It carries out the reaction (2R)-3-phosphoglycerate + ATP = (2R)-3-phospho-glyceroyl phosphate + ADP. It functions in the pathway carbohydrate degradation; glycolysis; pyruvate from D-glyceraldehyde 3-phosphate: step 2/5. This is Phosphoglycerate kinase from Borreliella burgdorferi (strain ZS7) (Borrelia burgdorferi).